The sequence spans 551 residues: Chaperonin GroEL 4 (551 aa).

Residues 30–33, Lys-51, 87–91, Gly-415, and Asp-495 each bind ATP; these read TLGP and DGTTT.

This sequence belongs to the chaperonin (HSP60) family. As to quaternary structure, forms a cylinder of 14 subunits composed of two heptameric rings stacked back-to-back. Interacts with the co-chaperonin GroES.

Its subcellular location is the cytoplasm. The enzyme catalyses ATP + H2O + a folded polypeptide = ADP + phosphate + an unfolded polypeptide.. Its function is as follows. Together with its co-chaperonin GroES, plays an essential role in assisting protein folding. The GroEL-GroES system forms a nano-cage that allows encapsulation of the non-native substrate proteins and provides a physical environment optimized to promote and accelerate protein folding. The protein is Chaperonin GroEL 4 of Mesorhizobium japonicum (strain LMG 29417 / CECT 9101 / MAFF 303099) (Mesorhizobium loti (strain MAFF 303099)).